Reading from the N-terminus, the 284-residue chain is Plastid-lipid-associated protein 6, chloroplastic (284 aa).

Residues 1–11 show a composition bias toward low complexity; the sequence is MATSSTFSSLL. A disordered region spans residues 1 to 47; that stretch reads MATSSTFSSLLPSPPALLSDHRSPPPSIRYSFSPLTTPKSSRLGFTV. A chloroplast-targeting transit peptide spans 1–72; it reads MATSSTFSSL…SIGGESDPPP (72 aa). Residues Ser-96, Ser-105, Ser-148, Ser-151, and Ser-155 each carry the phosphoserine modification.

The protein belongs to the PAP/fibrillin family. Part of the Photosystem II light-harvesting complex (LHCII). In terms of processing, phosphorylated as part of a basal defense response.

Its subcellular location is the plastid. It localises to the chloroplast. It is found in the plastoglobule. Functionally, required for plastoglobule development and resistance to multiple stresses. Regulates plastoglobule osmiophilic content. May be involved in the transport of lipophilic antioxidants in and out of the plastoglobule. The protein is Plastid-lipid-associated protein 6, chloroplastic of Arabidopsis thaliana (Mouse-ear cress).